Consider the following 342-residue polypeptide: Erlin-1 (342 aa).

Residues 1–6 (MAHVGA) are Cytoplasmic-facing. The helical transmembrane segment at 7-23 (VVAAMAGLMAILLHSSI) threads the bilayer. The Lumenal segment spans residues 24 to 342 (HKIEEGHLAV…ASKPKASEGH (319 aa)). A glycan (N-linked (GlcNAc...) asparagine) is linked at asparagine 106. The disordered stretch occupies residues 308 to 342 (SSASRPAAGESEQLESLSMRESLKKASKPKASEGH).

This sequence belongs to the band 7/mec-2 family.

It localises to the endoplasmic reticulum membrane. Mediates the endoplasmic reticulum-associated degradation (ERAD) of inositol 1,4,5-trisphosphate receptors (IP3Rs). Involved in regulation of cellular cholesterol homeostasis by regulation the SREBP signaling pathway. Binds cholesterol and may promote ER retention of the SCAP-SREBF complex. The polypeptide is Erlin-1 (Danio rerio (Zebrafish)).